The sequence spans 819 residues: Nuclear pore complex protein Nup93 (819 aa).

Threonine 49 is modified (phosphothreonine). Phosphoserine occurs at positions 52, 66, 72, 75, 80, 430, and 767.

Belongs to the nucleoporin interacting component (NIC) family. Part of the nuclear pore complex (NPC). Component of the p62 complex, a complex composed of NUP62 and NUP54. Forms a complex with NUP35, NUP155, NUP205 and lamin B; the interaction with NUP35 is direct. Does not interact with TPR. Interacts with SMAD4 and IPO7; translocates SMAD4 to the nucleus through the NPC upon BMP7 stimulation resulting in activation of SMAD4 signaling.

Its subcellular location is the nucleus membrane. It localises to the nucleus. The protein resides in the nuclear pore complex. The protein localises to the nucleus envelope. Its function is as follows. Plays a role in the nuclear pore complex (NPC) assembly and/or maintenance. May anchor nucleoporins, but not NUP153 and TPR, to the NPC. During renal development, regulates podocyte migration and proliferation through SMAD4 signaling. This Pongo abelii (Sumatran orangutan) protein is Nuclear pore complex protein Nup93 (NUP93).